The following is a 709-amino-acid chain: G1/S-specific cyclin-E (709 aa).

5 disordered regions span residues 1-30 (MGLNAKSVCSTSSTEPNGSIVTTAPSNGEV), 43-149 (ISSS…NLSS), 162-205 (VDGQ…GSKQ), 221-289 (TVVT…PKHQ), and 642-709 (ALRA…RSNP). Composition is skewed to polar residues over residues 7–29 (SVCSTSSTEPNGSIVTTAPSNGE), 61–70 (PSTSFSSASQ), and 91–106 (CDSQNLAASTAATSNG). Phosphoserine occurs at positions 114, 115, 117, and 129. Residues 162 to 175 (VDGQSTQELLSIRS) are compositionally biased toward polar residues. Residues Ser187, Ser192, Ser195, and Ser198 each carry the phosphoserine modification. The segment covering 187 to 199 (SPLPDSPDSPPSP) has biased composition (pro residues). The span at 228–258 (EDDDLLDDSCEDYSYDEDDEDDVEEEDDDVE) shows a compositional bias: acidic residues. Positions 260–277 (YSSTISPASSGCSQQQAV) are enriched in polar residues. Thr651 carries the post-translational modification Phosphothreonine. Positions 677–709 (SSTTTCCNTAASNKGGKSSSNNSVTSCSSRSNP) are enriched in low complexity.

It belongs to the cyclin family. Cyclin E subfamily. As to quaternary structure, interacts with a member of the CDK2/CDK protein kinases to form a serine/threonine kinase holoenzyme complex. The cyclin subunit imparts substrate specificity to the complex. Interacts (via C-terminus) with Z600 (via C-terminus). In terms of tissue distribution, isoform II is ubiquitous in early embryos and, prior to mitosis 14, is rapidly degraded in all cells except the pole (germ) cells. Expressed during G1 phase in proliferating peripheral nervous system cells. Constitutive expression in embryonic cycles lacking a G1 phase.

The protein localises to the nucleus. Its function is as follows. Essential for the control of the cell cycle at the G1/S (start) transition. Targeted by archipelago for degradation by the SFC ubiquitin ligase complex. This chain is G1/S-specific cyclin-E (CycE), found in Drosophila melanogaster (Fruit fly).